The sequence spans 248 residues: UPF0736 protein BCE_1296 (248 aa).

Belongs to the UPF0736 family.

This Bacillus cereus (strain ATCC 10987 / NRS 248) protein is UPF0736 protein BCE_1296.